The primary structure comprises 3477 residues: Abnormal spindle-like microcephaly-associated protein (3477 aa).

The disordered stretch occupies residues 1-30 (MANRRVGRGCWEVSPTERRPPAGLRGPAAE). Phosphoserine is present on residues Ser280, Ser283, Ser367, and Ser392. Residues 308-409 (ITQSQIHFLS…NMAYMCTSQQ (102 aa)) are sufficient for interaction with KATNA1:KATNB1. The segment covering 415-424 (LSNENSQVPQ) has biased composition (polar residues). Disordered regions lie at residues 415 to 443 (LSNE…ECQG) and 559 to 581 (KNEV…DGSM). A Phosphoserine modification is found at Ser425. Over residues 560-570 (NEVTPSSTTAS) the composition is skewed to polar residues. Ser605 carries the phosphoserine modification. Positions 920-1056 (KASKEILLAF…LLWKIAFAFQ (137 aa)) constitute a Calponin-homology (CH) 1 domain. The stretch at 1057–1078 (VDISLNLDQLKEEIAFLKHTKS) forms a coiled coil. The residue at position 1103 (Ser1103) is a Phosphoserine. Residues 1110–1261 (SENIKLLMDW…YLSFLCARLL (152 aa)) form the Calponin-homology (CH) 2 domain. IQ domains follow at residues 1347–1378 (QNKA…IILQ), 1393–1422 (YLWA…MLKS), 1582–1613 (LKKT…VIIQ), 1632–1661 (TRSA…SVIK), 1655–1684 (ILTS…ATIK), 1728–1757 (MRES…AVIS), 1751–1782 (QRKA…IVIQ), 1801–1830 (VKKA…AALK), 1824–1853 (QSIA…SIIK), 1874–1903 (TKAA…AALK), 1897–1928 (EHQA…LVIQ), 1947–1978 (LRHA…IIIQ), 1970–2001 (QHKC…LLIQ), 2020–2049 (TKAA…AAVT), 2043–2074 (CNKA…IIIQ), 2093–2124 (LKKT…TFIK), 2116–2147 (MHRA…IVIQ), 2166–2197 (ILKA…TLIQ), 2189–2218 (MQTA…ITKT), 2239–2270 (LRHS…TLIQ), 2262–2293 (MHIA…ILIQ), 2311–2342 (VQNA…TFIQ), 2334–2365 (MHRA…VVIQ), 2384–2415 (QRHS…TLIQ), 2407–2438 (MHSS…IFVQ), 2457–2488 (LRKA…VLIQ), 2530–2561 (QWHS…IVIQ), 2624–2653 (QHQA…TVVS), 2665–2696 (RTQA…TLIQ), 2688–2719 (MHRA…VVIQ), 2738–2767 (VQKS…EKMA), 2859–2890 (QKRA…VVLQ), 2909–2938 (IRSS…STIK), 2932–2963 (IKNS…KIQA), 2954–2985 (KVKA…KIIQ), 3029–3060 (RHRA…LIIQ), 3079–3110 (FKKS…RLLH), 3181–3210 (RNRA…GIIK), and 3204–3235 (FTSG…IRLS).

As to quaternary structure, interacts with KATNA1 and KATNB1; katanin complex formation KATNA1:KATNB1 is required for the association.

It is found in the cytoplasm. Its subcellular location is the cytoskeleton. It localises to the spindle. The protein resides in the nucleus. Its function is as follows. Involved in mitotic spindle regulation and coordination of mitotic processes. The function in regulating microtubule dynamics at spindle poles including spindle orientation, astral microtubule density and poleward microtubule flux seems to depend on the association with the katanin complex formed by KATNA1 and KATNB1. Enhances the microtubule lattice severing activity of KATNA1 by recruiting the katanin complex to microtubules. Can block microtubule minus-end growth and reversely this function can be enhanced by the katanin complex. May have a preferential role in regulating neurogenesis. This Homo sapiens (Human) protein is Abnormal spindle-like microcephaly-associated protein (ASPM).